Consider the following 201-residue polypeptide: Glycine-rich protein 23 (201 aa).

The first 24 residues, 1-24, serve as a signal peptide directing secretion; that stretch reads MGLISGKVCVFIFVFALVAEFSFG. A run of 21 repeats spans residues 62-67, 68-73, 74-79, 80-85, 86-91, 92-97, 98-103, 104-109, 110-115, 116-121, 122-129, 130-135, 136-143, 144-151, 152-157, 158-163, 164-169, 170-175, 176-182, 184-189, and 190-194. The interval 62-194 is 21 X 6 AA approximate tandem repeats of G-L-G-G-G-G, Gly-rich; that stretch reads GLGGGGGLGG…IGGGGGLGGG (133 aa).

This Arabidopsis thaliana (Mouse-ear cress) protein is Glycine-rich protein 23.